The primary structure comprises 700 residues: Elongation factor G (700 aa).

Positions 10–286 (TKVRNIGIMA…AVVDYLPSPL (277 aa)) constitute a tr-type G domain. GTP contacts are provided by residues 19–26 (AHIDAGKT), 83–87 (DTPGH), and 137–140 (NKMD).

The protein belongs to the TRAFAC class translation factor GTPase superfamily. Classic translation factor GTPase family. EF-G/EF-2 subfamily.

The protein resides in the cytoplasm. Functionally, catalyzes the GTP-dependent ribosomal translocation step during translation elongation. During this step, the ribosome changes from the pre-translocational (PRE) to the post-translocational (POST) state as the newly formed A-site-bound peptidyl-tRNA and P-site-bound deacylated tRNA move to the P and E sites, respectively. Catalyzes the coordinated movement of the two tRNA molecules, the mRNA and conformational changes in the ribosome. This chain is Elongation factor G, found in Saccharopolyspora erythraea (strain ATCC 11635 / DSM 40517 / JCM 4748 / NBRC 13426 / NCIMB 8594 / NRRL 2338).